Consider the following 493-residue polypeptide: Transcript termination protein OPG145 (493 aa).

The region spanning 100-256 is the Helicase ATP-binding domain; the sequence is MIKLKRPLYI…NSIINIAKLS (157 aa). Position 113 to 120 (113 to 120) interacts with ATP; sequence LACGFGKT. Positions 206-209 match the DESH box motif; that stretch reads DESH.

It belongs to the helicase family. Poxviruses subfamily. In terms of assembly, interacts with OPG087. Might be part of a transcription complex composed at least of OPG087, OPG110, and OPG145.

It localises to the virion. Its function is as follows. DNA helicase which seems to act as a postreplicative transcription termination factor. Involved in ATP-dependent release of nascent RNA. Forms a stable complex with single-stranded DNA, and to a lesser extent RNA. The sequence is that of Transcript termination protein OPG145 (OPG145) from Variola virus (isolate Human/India/Ind3/1967) (VARV).